Reading from the N-terminus, the 216-residue chain is Refilin-B (216 aa).

Residues 1–52 form a disordered region; sequence MVGRLSLQDVPELVDTKKKGDGVLDSPDSGLPPSPSPSHWGLAAATGGGGER. Phosphoserine is present on residues serine 6 and serine 26.

The protein belongs to the Refilin family. As to quaternary structure, interacts with FLNA and FLNB.

It is found in the cytoplasm. Its subcellular location is the cytoskeleton. Functionally, involved in the regulation of the perinuclear actin network and nuclear shape through interaction with filamins. Plays an essential role in the formation of cartilaginous skeletal elements. The protein is Refilin-B of Rattus norvegicus (Rat).